The following is a 723-amino-acid chain: CSC1-like protein ERD4 (723 aa).

At 1–5 (MEFAS) the chain is on the cytoplasmic side. A helical membrane pass occupies residues 6-26 (FLVSLGTSAIIFVVLMFLFTW). The Extracellular portion of the chain corresponds to 27–90 (LSRRPGNVPV…TAVYFVFQST (64 aa)). Residues 91 to 111 (VLGIFALSALLLLPTLLPIAA) traverse the membrane as a helical segment. Over 112–148 (TDNNLETSRSATDTTSNGTFSQLDNLSMANITKSSSR) the chain is Cytoplasmic. A helical transmembrane segment spans residues 149–169 (LWAFLGAVYWVSVVTYFMLWK). Residues 170 to 364 (AYKHVAALRA…IKFFSRIVRQ (195 aa)) are Extracellular-facing. The helical transmembrane segment at 365 to 385 (YVIYFLVAITILFYMIPIAFV) threads the bilayer. Topologically, residues 386–416 (SAITTLANLQKALPFLKPIVDIAFIRTILES) are cytoplasmic. The helical transmembrane segment at 417 to 437 (YLPQIALIVFLAMLPKFLMFL) threads the bilayer. Over 438–456 (SKSEGIPSQSHAIRATSGK) the chain is Extracellular. The helical transmembrane segment at 457–477 (YFYFSVLNVFIGVTLAGSLFE) threads the bilayer. The Cytoplasmic portion of the chain corresponds to 478-508 (NLKALEEKPNSFITLLATSLPKSATFFLTYV). A helical transmembrane segment spans residues 509 to 529 (ALKFFVGYGLELSRIIPLIIF). The Extracellular portion of the chain corresponds to 530 to 572 (HLKKKYLCKTEAEVKEAWYPGDLSYATRVPSDMLILTITFCYS). Residues 573-593 (VIAPLILVFGVIYFGLGWLIL) form a helical membrane-spanning segment. The Cytoplasmic segment spans residues 594–614 (RNQALKVYVPSYESYGRMWPH). The chain crosses the membrane as a helical span at residues 615 to 635 (IHTRILAALFLFQLVMFGYLG). At 636-637 (VK) the chain is on the extracellular side. A helical membrane pass occupies residues 638-658 (IFVWAILLVPLIFISLIFGYV). The Cytoplasmic portion of the chain corresponds to 659 to 723 (CRQKFYGGFE…YQDYAAISAA (65 aa)).

This sequence belongs to the CSC1 (TC 1.A.17) family.

The protein resides in the plastid. Its subcellular location is the chloroplast membrane. Acts as an osmosensitive calcium-permeable cation channel. The sequence is that of CSC1-like protein ERD4 (ERD4) from Brassica juncea (Indian mustard).